The sequence spans 220 residues: Guanylate kinase (220 aa).

The Guanylate kinase-like domain maps to 16 to 195; the sequence is GLMFVLSSPS…AFESVRSILR (180 aa). 23 to 30 lines the ATP pocket; that stretch reads SPSGAGKT.

This sequence belongs to the guanylate kinase family.

Its subcellular location is the cytoplasm. The enzyme catalyses GMP + ATP = GDP + ADP. Functionally, essential for recycling GMP and indirectly, cGMP. The sequence is that of Guanylate kinase from Rhodopseudomonas palustris (strain ATCC BAA-98 / CGA009).